Consider the following 211-residue polypeptide: FMN-dependent NADH:quinone oxidoreductase 2 (211 aa).

Residues Ser-10 and 17-19 (SRS) each bind FMN.

The protein belongs to the azoreductase type 1 family. Homodimer. It depends on FMN as a cofactor.

It carries out the reaction 2 a quinone + NADH + H(+) = 2 a 1,4-benzosemiquinone + NAD(+). The enzyme catalyses N,N-dimethyl-1,4-phenylenediamine + anthranilate + 2 NAD(+) = 2-(4-dimethylaminophenyl)diazenylbenzoate + 2 NADH + 2 H(+). In terms of biological role, quinone reductase that provides resistance to thiol-specific stress caused by electrophilic quinones. Its function is as follows. Also exhibits azoreductase activity. Catalyzes the reductive cleavage of the azo bond in aromatic azo compounds to the corresponding amines. This chain is FMN-dependent NADH:quinone oxidoreductase 2, found in Listeria monocytogenes serovar 1/2a (strain ATCC BAA-679 / EGD-e).